The chain runs to 253 residues: MICOS complex subunit mic25-b (253 aa).

The N-myristoyl glycine moiety is linked to residue glycine 2. The segment at 38–82 (KDQSTWAASGAASGSATVPSKVGSSASHPAAASKDGAHKPTAAGV) is disordered. Over residues 44–53 (AASGAASGSA) the composition is skewed to low complexity. Residues 87 to 116 (AEEDLYRRYEREQTLIQEELARLAKREKDA) adopt a coiled-coil conformation. The region spanning 206–248 (DPVCMDLQSNILKCYAENKQERLNCSDLAKEYQKCVSAAQKNL) is the CHCH domain. 2 consecutive short sequence motifs (cx9C motif) follow at residues 209 to 219 (CMDLQSNILKC) and 230 to 240 (CSDLAKEYQKC). 2 disulfides stabilise this stretch: cysteine 209/cysteine 240 and cysteine 219/cysteine 230.

This sequence belongs to the MICOS complex subunit Mic19 family. Metazoan Mic25 subfamily. As to quaternary structure, component of the mitochondrial contact site and cristae organizing system (MICOS) complex (also known as MINOS or MitOS complex).

The protein localises to the mitochondrion inner membrane. Its function is as follows. Component of the MICOS complex, a large protein complex of the mitochondrial inner membrane that plays crucial roles in the maintenance of crista junctions, inner membrane architecture, and formation of contact sites to the outer membrane. The polypeptide is MICOS complex subunit mic25-b (chchd6-b) (Xenopus laevis (African clawed frog)).